The chain runs to 445 residues: Probable glycine dehydrogenase (decarboxylating) subunit 1 (445 aa).

It belongs to the GcvP family. N-terminal subunit subfamily. In terms of assembly, the glycine cleavage system is composed of four proteins: P, T, L and H. In this organism, the P 'protein' is a heterodimer of two subunits.

The catalysed reaction is N(6)-[(R)-lipoyl]-L-lysyl-[glycine-cleavage complex H protein] + glycine + H(+) = N(6)-[(R)-S(8)-aminomethyldihydrolipoyl]-L-lysyl-[glycine-cleavage complex H protein] + CO2. The glycine cleavage system catalyzes the degradation of glycine. The P protein binds the alpha-amino group of glycine through its pyridoxal phosphate cofactor; CO(2) is released and the remaining methylamine moiety is then transferred to the lipoamide cofactor of the H protein. The chain is Probable glycine dehydrogenase (decarboxylating) subunit 1 from Anaeromyxobacter dehalogenans (strain 2CP-1 / ATCC BAA-258).